Reading from the N-terminus, the 182-residue chain is Large ribosomal subunit protein uL10 (182 aa).

Belongs to the universal ribosomal protein uL10 family. In terms of assembly, part of the ribosomal stalk of the 50S ribosomal subunit. The N-terminus interacts with L11 and the large rRNA to form the base of the stalk. The C-terminus forms an elongated spine to which L12 dimers bind in a sequential fashion forming a multimeric L10(L12)X complex.

Functionally, forms part of the ribosomal stalk, playing a central role in the interaction of the ribosome with GTP-bound translation factors. This is Large ribosomal subunit protein uL10 from Microcystis aeruginosa (strain NIES-843 / IAM M-2473).